The primary structure comprises 837 residues: Probable aldehyde oxidase 4 (837 aa).

Residues Glu-9–Leu-98 form the 2Fe-2S ferredoxin-type domain. Residues Cys-50, Cys-55, Cys-58, and Cys-80 each contribute to the [2Fe-2S] cluster site. Positions Ile-240 to Ser-427 constitute an FAD-binding PCMH-type domain.

It belongs to the xanthine dehydrogenase family. Aldehyde oxidases (AO) are homodimers and heterodimers of AO subunits. It depends on [2Fe-2S] cluster as a cofactor. Requires FAD as cofactor. Mo-molybdopterin is required as a cofactor.

The catalysed reaction is an aldehyde + O2 + H2O = a carboxylate + H2O2 + H(+). In Oryza sativa subsp. japonica (Rice), this protein is Probable aldehyde oxidase 4.